The primary structure comprises 460 residues: Serine--tRNA ligase (460 aa).

An L-serine-binding site is contributed by 255-257 (TAE). ATP-binding positions include 286–288 (RKE) and valine 302. Glutamate 309 contributes to the L-serine binding site. ATP is bound at residue 373–376 (EMVS). Threonine 409 serves as a coordination point for L-serine.

This sequence belongs to the class-II aminoacyl-tRNA synthetase family. Type-1 seryl-tRNA synthetase subfamily. As to quaternary structure, homodimer. The tRNA molecule binds across the dimer.

The protein resides in the cytoplasm. It carries out the reaction tRNA(Ser) + L-serine + ATP = L-seryl-tRNA(Ser) + AMP + diphosphate + H(+). The catalysed reaction is tRNA(Sec) + L-serine + ATP = L-seryl-tRNA(Sec) + AMP + diphosphate + H(+). Its pathway is aminoacyl-tRNA biosynthesis; selenocysteinyl-tRNA(Sec) biosynthesis; L-seryl-tRNA(Sec) from L-serine and tRNA(Sec): step 1/1. Functionally, catalyzes the attachment of serine to tRNA(Ser). Is also able to aminoacylate tRNA(Sec) with serine, to form the misacylated tRNA L-seryl-tRNA(Sec), which will be further converted into selenocysteinyl-tRNA(Sec). This Hyperthermus butylicus (strain DSM 5456 / JCM 9403 / PLM1-5) protein is Serine--tRNA ligase.